A 585-amino-acid chain; its full sequence is A-type ATP synthase subunit A (585 aa).

Position 231–238 (231–238 (GPFGSGKT)) interacts with ATP.

It belongs to the ATPase alpha/beta chains family. In terms of assembly, has multiple subunits with at least A(3), B(3), C, D, E, F, H, I and proteolipid K(x).

It localises to the cell membrane. It carries out the reaction ATP + H2O + 4 H(+)(in) = ADP + phosphate + 5 H(+)(out). Its function is as follows. Produces ATP from ADP in the presence of a proton gradient across the membrane. The archaeal alpha chain is a catalytic subunit. In terms of biological role, component of the A-type ATP synthase that produces ATP from ADP in the presence of a proton gradient across the membrane. The A chain is the catalytic subunit. In Thermococcus sp. (strain KI), this protein is A-type ATP synthase subunit A.